A 401-amino-acid polypeptide reads, in one-letter code: MNAKIALTETTNIKEPEPVTTATATKENAFAGASDALGAGIDALFADQGAQYSLIPLDMIQVKTQIRESFEDEENTLEDLAASIKVRGVLQPILLRSNSEGYELIAGERRYRASKLAGLEQIPAYIREMSDEEAEDAQMAENIHRKNLTQIEEAKKIQRDLDKLGSVDAVLEKHQKSRPWLSKMLALLNLPEQAKRLVIENVSADVEVINTVKMVEKINPVKAKELVDDLKKTRGKENARDKAAAVKEEVKPSKKPKADNGEKTPKGRSHEELGQLDVFAGAKFDPFSDAHNGSESPRPLILSPVDVLNRAYTNIFEHGNSPKTILETMPKDEKDRVEGWLHSFYDAGKSVNQDVGRSVIQGFRNGTFSSDGDGAFALVAFLHGVESAEFHLLNVFGSVRK.

The tract at residues 232–272 (KTRGKENARDKAAAVKEEVKPSKKPKADNGEKTPKGRSHEE) is disordered.

This sequence belongs to the ParB family.

In Xylella fastidiosa (strain 9a5c), this protein is Probable plasmid-partitioning protein ParB.